The chain runs to 140 residues: Small ribosomal subunit protein uS19 (140 aa).

The segment at leucine 55 to histidine 74 is disordered.

Belongs to the universal ribosomal protein uS19 family.

In terms of biological role, protein S19 forms a complex with S13 that binds strongly to the 16S ribosomal RNA. This Halobacterium salinarum (strain ATCC 29341 / DSM 671 / R1) protein is Small ribosomal subunit protein uS19.